Consider the following 175-residue polypeptide: uncharacterized protein (175 aa).

Belongs to the asfivirus B175L family.

This is an uncharacterized protein from African swine fever virus (strain Badajoz 1971 Vero-adapted) (Ba71V).